The chain runs to 255 residues: Small ribosomal subunit protein eS1A (255 aa).

Basic residues predominate over residues 1–18; the sequence is MAVGKNKRLSKGKKGQKK. The tract at residues 1–20 is disordered; that stretch reads MAVGKNKRLSKGKKGQKKRV. At Ala2 the chain carries N-acetylalanine; partial. Thr245 carries the phosphothreonine modification. A Glycyl lysine isopeptide (Lys-Gly) (interchain with G-Cter in ubiquitin) cross-link involves residue Lys248. Thr254 bears the Phosphothreonine mark.

The protein belongs to the eukaryotic ribosomal protein eS1 family. As to quaternary structure, component of the small ribosomal subunit. Mature ribosomes consist of a small (40S) and a large (60S) subunit. The 40S subunit contains about 33 different proteins and 1 molecule of RNA (18S). The 60S subunit contains about 49 different proteins and 3 molecules of RNA (25S, 5.8S and 5S).

The protein localises to the cytoplasm. In Saccharomyces cerevisiae (strain RM11-1a) (Baker's yeast), this protein is Small ribosomal subunit protein eS1A.